The sequence spans 217 residues: Pyridoxine/pyridoxamine 5'-phosphate oxidase (217 aa).

Residues 13 to 16 and K71 each bind substrate; that span reads RREY. Residues 66–71, 81–82, R87, K88, and Q110 contribute to the FMN site; these read RIVLLK and YT. Substrate is bound by residues Y128, R132, and S136. Residues 145 to 146 and W190 each bind FMN; that span reads QS. 196 to 198 contributes to the substrate binding site; that stretch reads RLH. Residue R200 coordinates FMN.

The protein belongs to the pyridoxamine 5'-phosphate oxidase family. As to quaternary structure, homodimer. The cofactor is FMN.

It catalyses the reaction pyridoxamine 5'-phosphate + O2 + H2O = pyridoxal 5'-phosphate + H2O2 + NH4(+). The enzyme catalyses pyridoxine 5'-phosphate + O2 = pyridoxal 5'-phosphate + H2O2. The protein operates within cofactor metabolism; pyridoxal 5'-phosphate salvage; pyridoxal 5'-phosphate from pyridoxamine 5'-phosphate: step 1/1. It participates in cofactor metabolism; pyridoxal 5'-phosphate salvage; pyridoxal 5'-phosphate from pyridoxine 5'-phosphate: step 1/1. Catalyzes the oxidation of either pyridoxine 5'-phosphate (PNP) or pyridoxamine 5'-phosphate (PMP) into pyridoxal 5'-phosphate (PLP). The sequence is that of Pyridoxine/pyridoxamine 5'-phosphate oxidase from Proteus mirabilis (strain HI4320).